The following is a 427-amino-acid chain: MTKLLAYFPSPPQGVWHLGPVPIRAYALFIIAGIVAALLIGDRRWEARGGERGVIYDIALWTVPFGLVGGRLYHLATDWRTYWGPGGAGFGAAVRIWDGGLGIWGAVALGAVGAWIGCRRHGIPLPAFADALAPGIILAQAIGRLGNYFNQELYGRETTLPWGLEIFYRRDPSGYIDPHSLDGVSTGQVALVVQPTFLYELLWNLLIFVALLYADRRLTLGHGRLFALYVAGYCVGRFCVELLRDDTATHIAGIRINSFTSTFVFIGAVVYLMAAPKGREDPESLRGNQYVEEEPAEPEPATVAATTEAATEGVAAPADGAEAAGADATAQRPEESAEPDVEKPESEETEAAEEASEPEAEEPEAPEAEEPEEPETEEPEADSGEEPEEESGEAPEQLVAEEPEPAPQQPETKRRWGARLRERLSGR.

The next 4 membrane-spanning stretches (helical) occupy residues 21-41 (VPIR…LLIG), 53-73 (GVIY…GRLY), 96-116 (IWDG…GAWI), and 122-142 (GIPL…AQAI). Residue R144 coordinates a 1,2-diacyl-sn-glycero-3-phospho-(1'-sn-glycerol). The next 2 membrane-spanning stretches (helical) occupy residues 189–209 (VALV…LIFV) and 256–276 (INSF…MAAP). Positions 280–427 (EDPESLRGNQ…ARLRERLSGR (148 aa)) are disordered. Residues 299–330 (EPATVAATTEAATEGVAAPADGAEAAGADATA) show a composition bias toward low complexity. Over residues 332–346 (RPEESAEPDVEKPES) the composition is skewed to basic and acidic residues. Residues 347–404 (EETEAAEEASEPEAEEPEAPEAEEPEEPETEEPEADSGEEPEEESGEAPEQLVAEEPE) show a composition bias toward acidic residues. A compositionally biased stretch (basic and acidic residues) spans 411–427 (ETKRRWGARLRERLSGR).

It belongs to the Lgt family.

It is found in the cell membrane. It catalyses the reaction L-cysteinyl-[prolipoprotein] + a 1,2-diacyl-sn-glycero-3-phospho-(1'-sn-glycerol) = an S-1,2-diacyl-sn-glyceryl-L-cysteinyl-[prolipoprotein] + sn-glycerol 1-phosphate + H(+). Its pathway is protein modification; lipoprotein biosynthesis (diacylglyceryl transfer). In terms of biological role, catalyzes the transfer of the diacylglyceryl group from phosphatidylglycerol to the sulfhydryl group of the N-terminal cysteine of a prolipoprotein, the first step in the formation of mature lipoproteins. This Mycolicibacterium paratuberculosis (strain ATCC BAA-968 / K-10) (Mycobacterium paratuberculosis) protein is Phosphatidylglycerol--prolipoprotein diacylglyceryl transferase.